The following is a 188-amino-acid chain: Gamma-glutamylcyclotransferase (188 aa).

Position 19 to 22 (19 to 22 (YFAY)) interacts with substrate. Residue Glu98 is the Proton acceptor of the active site. Phosphoserine is present on Ser173.

The protein belongs to the gamma-glutamylcyclotransferase family. In terms of assembly, homodimer.

It catalyses the reaction an alpha-(gamma-L-glutamyl)-L-amino acid = 5-oxo-L-proline + an L-alpha-amino acid. Functionally, catalyzes the formation of 5-oxoproline from gamma-glutamyl dipeptides and may play a significant role in glutathione homeostasis. Induces release of cytochrome c from mitochondria with resultant induction of apoptosis. The protein is Gamma-glutamylcyclotransferase (Ggct) of Mus musculus (Mouse).